Consider the following 115-residue polypeptide: T cell receptor beta variable 11-3 (115 aa).

Positions 1-21 (MGTRLLCWVAFCLLVEELIEA) are cleaved as a signal peptide. The region spanning 22–115 (GVVQSPRYKI…SAVYLCASSL (94 aa)) is the Ig-like domain. The cysteines at positions 42 and 111 are disulfide-linked.

Alpha-beta TR is a heterodimer composed of an alpha and beta chain; disulfide-linked. The alpha-beta TR is associated with the transmembrane signaling CD3 coreceptor proteins to form the TR-CD3 (TcR or TCR). The assembly of alpha-beta TR heterodimers with CD3 occurs in the endoplasmic reticulum where a single alpha-beta TR heterodimer associates with one CD3D-CD3E heterodimer, one CD3G-CD3E heterodimer and one CD247 homodimer forming a stable octameric structure. CD3D-CD3E and CD3G-CD3E heterodimers preferentially associate with TR alpha and TR beta chains, respectively. The association of the CD247 homodimer is the last step of TcR assembly in the endoplasmic reticulum and is required for transport to the cell surface.

Its subcellular location is the cell membrane. Its function is as follows. V region of the variable domain of T cell receptor (TR) beta chain that participates in the antigen recognition. Alpha-beta T cell receptors are antigen specific receptors which are essential to the immune response and are present on the cell surface of T lymphocytes. Recognize peptide-major histocompatibility (MH) (pMH) complexes that are displayed by antigen presenting cells (APC), a prerequisite for efficient T cell adaptive immunity against pathogens. Binding of alpha-beta TR to pMH complex initiates TR-CD3 clustering on the cell surface and intracellular activation of LCK that phosphorylates the ITAM motifs of CD3G, CD3D, CD3E and CD247 enabling the recruitment of ZAP70. In turn ZAP70 phosphorylates LAT, which recruits numerous signaling molecules to form the LAT signalosome. The LAT signalosome propagates signal branching to three major signaling pathways, the calcium, the mitogen-activated protein kinase (MAPK) kinase and the nuclear factor NF-kappa-B (NF-kB) pathways, leading to the mobilization of transcription factors that are critical for gene expression and essential for T cell growth and differentiation. The T cell repertoire is generated in the thymus, by V-(D)-J rearrangement. This repertoire is then shaped by intrathymic selection events to generate a peripheral T cell pool of self-MH restricted, non-autoaggressive T cells. Post-thymic interaction of alpha-beta TR with the pMH complexes shapes TR structural and functional avidity. This chain is T cell receptor beta variable 11-3, found in Homo sapiens (Human).